The chain runs to 418 residues: Gamma-glutamyl phosphate reductase (418 aa).

This sequence belongs to the gamma-glutamyl phosphate reductase family.

It localises to the cytoplasm. It catalyses the reaction L-glutamate 5-semialdehyde + phosphate + NADP(+) = L-glutamyl 5-phosphate + NADPH + H(+). It functions in the pathway amino-acid biosynthesis; L-proline biosynthesis; L-glutamate 5-semialdehyde from L-glutamate: step 2/2. In terms of biological role, catalyzes the NADPH-dependent reduction of L-glutamate 5-phosphate into L-glutamate 5-semialdehyde and phosphate. The product spontaneously undergoes cyclization to form 1-pyrroline-5-carboxylate. This is Gamma-glutamyl phosphate reductase from Chlorobium limicola (strain DSM 245 / NBRC 103803 / 6330).